The sequence spans 227 residues: E3 ubiquitin-protein ligase ZNRF1 (227 aa).

A disordered region spans residues 1-38 (MGGKQSTAARSRGPFPGVSTDDSAVPPPGGAPHFGHYR). A lipid anchor (N-myristoyl glycine) is attached at Gly2. The required for endosomal and lysosomal localization and myristoylation stretch occupies residues 2–10 (GGKQSTAAR). A phosphoserine mark is found at Ser50, Ser52, and Ser53. Residues 77–105 (RGAGDAERAPGSGGSASDSTYAHGNGYQE) are disordered. Tyr103 carries the post-translational modification Phosphotyrosine. Ser123 carries the phosphoserine modification. Residues 184-225 (CVICLEELLQGDTIARLPCLCIYHKSCIDSWFEVNRSCPEHP) form an RING-type; atypical zinc finger.

As to quaternary structure, interacts with AKT1, GLUL and TUBB2A. Interacts with ZNRF2. Interacts (via its RING domain) with UBE2N. Interacts (when phosphorylated) with YWHAE. In terms of processing, N-myristoylation targets ZNRF1 to intracellular membranes. Phosphorylated by SRC at Tyr-103; leading to 'Lys-63'-linked ubiquitination of TLR3, lysosomal trafficking and degradation.

The protein localises to the endosome. It localises to the lysosome. Its subcellular location is the membrane. The protein resides in the cytoplasmic vesicle. It is found in the secretory vesicle. The protein localises to the synaptic vesicle membrane. It catalyses the reaction S-ubiquitinyl-[E2 ubiquitin-conjugating enzyme]-L-cysteine + [acceptor protein]-L-lysine = [E2 ubiquitin-conjugating enzyme]-L-cysteine + N(6)-ubiquitinyl-[acceptor protein]-L-lysine.. It participates in protein modification; protein ubiquitination. Functionally, E3 ubiquitin-protein ligase that plays a role in different processes including cell differentiation, receptor recycling or regulation of inflammation. Mediates the ubiquitination of AKT1 and GLUL, thereby playing a role in neuron cells differentiation. Plays a role in the establishment and maintenance of neuronal transmission and plasticity. Regulates Schwann cells differentiation by mediating ubiquitination of GLUL. Promotes neurodegeneration by mediating 'Lys-48'-linked polyubiquitination and subsequent degradation of AKT1 in axons: degradation of AKT1 prevents AKT1-mediated phosphorylation of GSK3B, leading to GSK3B activation and phosphorylation of DPYSL2/CRMP2 followed by destabilization of microtubule assembly in axons. Ubiquitinates the Na(+)/K(+) ATPase alpha-1 subunit/ATP1A1 and thereby influences its endocytosis and/or degradation. Controls ligand-induced EGFR signaling via mediating receptor ubiquitination and recruitment of the ESCRT machinery. Acts as a negative feedback mechanism controlling TLR3 trafficking by mediating TLR3 'Lys-63'-linked polyubiquitination to reduce type I IFN production. Modulates inflammation by promoting caveolin-1/CAV1 ubiquitination and degradation to regulate TLR4-activated immune response. In Bos taurus (Bovine), this protein is E3 ubiquitin-protein ligase ZNRF1 (ZNRF1).